We begin with the raw amino-acid sequence, 915 residues long: Kinesin-like protein KIN-10A (915 aa).

A compositionally biased stretch (pro residues) spans methionine 1–proline 16. Disordered regions lie at residues methionine 1–alanine 28 and histidine 34–threonine 53. The Kinesin motor domain occupies proline 56 to isoleucine 391. Glycine 137–serine 144 is an ATP binding site. Residues asparagine 426–lysine 517 are a coiled coil. The interval proline 676 to alanine 718 is disordered.

This sequence belongs to the TRAFAC class myosin-kinesin ATPase superfamily. Kinesin family. KIN-10 subfamily.

This is Kinesin-like protein KIN-10A from Oryza sativa subsp. japonica (Rice).